The sequence spans 337 residues: Anthranilate phosphoribosyltransferase (337 aa).

5-phospho-alpha-D-ribose 1-diphosphate-binding positions include Gly-81, Gly-84–Asp-85, Ser-89, Asn-91–Thr-94, Lys-109–Ser-117, and Ala-121. Gly-81 is an anthranilate binding site. Ser-93 lines the Mg(2+) pocket. Position 112 (Asn-112) interacts with anthranilate. Residue Arg-167 coordinates anthranilate. Mg(2+)-binding residues include Asp-226 and Glu-227.

Belongs to the anthranilate phosphoribosyltransferase family. Homodimer. Mg(2+) serves as cofactor.

It catalyses the reaction N-(5-phospho-beta-D-ribosyl)anthranilate + diphosphate = 5-phospho-alpha-D-ribose 1-diphosphate + anthranilate. It participates in amino-acid biosynthesis; L-tryptophan biosynthesis; L-tryptophan from chorismate: step 2/5. In terms of biological role, catalyzes the transfer of the phosphoribosyl group of 5-phosphorylribose-1-pyrophosphate (PRPP) to anthranilate to yield N-(5'-phosphoribosyl)-anthranilate (PRA). In Afipia carboxidovorans (strain ATCC 49405 / DSM 1227 / KCTC 32145 / OM5) (Oligotropha carboxidovorans), this protein is Anthranilate phosphoribosyltransferase.